Reading from the N-terminus, the 377-residue chain is Queuine tRNA-ribosyltransferase (377 aa).

Asp89 (proton acceptor) is an active-site residue. Residues 89–93 (DSGGF), Asp143, Gln188, and Gly215 each bind substrate. The tract at residues 246–252 (GVGKPED) is RNA binding. Asp265 functions as the Nucleophile in the catalytic mechanism. Residues 270-274 (TRNAR) form an RNA binding; important for wobble base 34 recognition region. Cys303, Cys305, Cys308, and His334 together coordinate Zn(2+).

This sequence belongs to the queuine tRNA-ribosyltransferase family. As to quaternary structure, homodimer. Within each dimer, one monomer is responsible for RNA recognition and catalysis, while the other monomer binds to the replacement base PreQ1. Zn(2+) serves as cofactor.

The enzyme catalyses 7-aminomethyl-7-carbaguanine + guanosine(34) in tRNA = 7-aminomethyl-7-carbaguanosine(34) in tRNA + guanine. It participates in tRNA modification; tRNA-queuosine biosynthesis. In terms of biological role, catalyzes the base-exchange of a guanine (G) residue with the queuine precursor 7-aminomethyl-7-deazaguanine (PreQ1) at position 34 (anticodon wobble position) in tRNAs with GU(N) anticodons (tRNA-Asp, -Asn, -His and -Tyr). Catalysis occurs through a double-displacement mechanism. The nucleophile active site attacks the C1' of nucleotide 34 to detach the guanine base from the RNA, forming a covalent enzyme-RNA intermediate. The proton acceptor active site deprotonates the incoming PreQ1, allowing a nucleophilic attack on the C1' of the ribose to form the product. After dissociation, two additional enzymatic reactions on the tRNA convert PreQ1 to queuine (Q), resulting in the hypermodified nucleoside queuosine (7-(((4,5-cis-dihydroxy-2-cyclopenten-1-yl)amino)methyl)-7-deazaguanosine). This chain is Queuine tRNA-ribosyltransferase, found in Acinetobacter baumannii (strain AB307-0294).